Reading from the N-terminus, the 762-residue chain is 5-methyltetrahydropteroyltriglutamate--homocysteine methyltransferase (762 aa).

5-methyltetrahydropteroyltri-L-glutamate contacts are provided by residues R18 to K21 and K112. Residues I435 to S437 and E488 contribute to the L-homocysteine site. L-methionine is bound by residues I435–S437 and E488. 5-methyltetrahydropteroyltri-L-glutamate contacts are provided by residues R519–C520 and W565. D603 is an L-homocysteine binding site. Position 603 (D603) interacts with L-methionine. E609 is a 5-methyltetrahydropteroyltri-L-glutamate binding site. Zn(2+) contacts are provided by H645, C647, and E669. H698 serves as the catalytic Proton donor. Zn(2+) is bound at residue C730.

It belongs to the vitamin-B12 independent methionine synthase family. Requires Zn(2+) as cofactor.

It carries out the reaction 5-methyltetrahydropteroyltri-L-glutamate + L-homocysteine = tetrahydropteroyltri-L-glutamate + L-methionine. It functions in the pathway amino-acid biosynthesis; L-methionine biosynthesis via de novo pathway; L-methionine from L-homocysteine (MetE route): step 1/1. Functionally, catalyzes the transfer of a methyl group from 5-methyltetrahydrofolate to homocysteine resulting in methionine formation. The protein is 5-methyltetrahydropteroyltriglutamate--homocysteine methyltransferase of Bacillus licheniformis (strain ATCC 14580 / DSM 13 / JCM 2505 / CCUG 7422 / NBRC 12200 / NCIMB 9375 / NCTC 10341 / NRRL NRS-1264 / Gibson 46).